The primary structure comprises 215 residues: Pyridoxine/pyridoxamine 5'-phosphate oxidase (215 aa).

Residues 8 to 11 (RQEY) and Lys66 contribute to the substrate site. Residues 61 to 66 (RIVLLK), 76 to 77 (YT), Arg82, Lys83, and Gln105 contribute to the FMN site. Residues Tyr123 and Arg127 each coordinate substrate. Residues 140–141 (QS) and Trp186 contribute to the FMN site. 192–194 (RLH) is a substrate binding site. Arg196 serves as a coordination point for FMN.

Belongs to the pyridoxamine 5'-phosphate oxidase family. In terms of assembly, homodimer. It depends on FMN as a cofactor.

It catalyses the reaction pyridoxamine 5'-phosphate + O2 + H2O = pyridoxal 5'-phosphate + H2O2 + NH4(+). The catalysed reaction is pyridoxine 5'-phosphate + O2 = pyridoxal 5'-phosphate + H2O2. Its pathway is cofactor metabolism; pyridoxal 5'-phosphate salvage; pyridoxal 5'-phosphate from pyridoxamine 5'-phosphate: step 1/1. The protein operates within cofactor metabolism; pyridoxal 5'-phosphate salvage; pyridoxal 5'-phosphate from pyridoxine 5'-phosphate: step 1/1. Its function is as follows. Catalyzes the oxidation of either pyridoxine 5'-phosphate (PNP) or pyridoxamine 5'-phosphate (PMP) into pyridoxal 5'-phosphate (PLP). The polypeptide is Pyridoxine/pyridoxamine 5'-phosphate oxidase (Salinibacter ruber (strain DSM 13855 / M31)).